Consider the following 491-residue polypeptide: Protein nucleotidyltransferase YdiU (491 aa).

The ATP site is built by glycine 94, glycine 96, arginine 97, lysine 117, aspartate 129, glycine 130, arginine 180, and arginine 187. Aspartate 256 functions as the Proton acceptor in the catalytic mechanism. Asparagine 257 and aspartate 266 together coordinate Mg(2+). Aspartate 266 serves as a coordination point for ATP.

The protein belongs to the SELO family. Requires Mg(2+) as cofactor. It depends on Mn(2+) as a cofactor.

The enzyme catalyses L-seryl-[protein] + ATP = 3-O-(5'-adenylyl)-L-seryl-[protein] + diphosphate. The catalysed reaction is L-threonyl-[protein] + ATP = 3-O-(5'-adenylyl)-L-threonyl-[protein] + diphosphate. It catalyses the reaction L-tyrosyl-[protein] + ATP = O-(5'-adenylyl)-L-tyrosyl-[protein] + diphosphate. It carries out the reaction L-histidyl-[protein] + UTP = N(tele)-(5'-uridylyl)-L-histidyl-[protein] + diphosphate. The enzyme catalyses L-seryl-[protein] + UTP = O-(5'-uridylyl)-L-seryl-[protein] + diphosphate. The catalysed reaction is L-tyrosyl-[protein] + UTP = O-(5'-uridylyl)-L-tyrosyl-[protein] + diphosphate. Nucleotidyltransferase involved in the post-translational modification of proteins. It can catalyze the addition of adenosine monophosphate (AMP) or uridine monophosphate (UMP) to a protein, resulting in modifications known as AMPylation and UMPylation. This Clostridium botulinum (strain Loch Maree / Type A3) protein is Protein nucleotidyltransferase YdiU.